The chain runs to 435 residues: UDP-N-acetylmuramate--L-alanine ligase (435 aa).

108–114 (GSHGKTS) contacts ATP.

The protein belongs to the MurCDEF family.

The protein resides in the cytoplasm. The catalysed reaction is UDP-N-acetyl-alpha-D-muramate + L-alanine + ATP = UDP-N-acetyl-alpha-D-muramoyl-L-alanine + ADP + phosphate + H(+). It participates in cell wall biogenesis; peptidoglycan biosynthesis. Functionally, cell wall formation. The protein is UDP-N-acetylmuramate--L-alanine ligase of Exiguobacterium sp. (strain ATCC BAA-1283 / AT1b).